The primary structure comprises 385 residues: 8-amino-7-oxononanoate synthase (385 aa).

A substrate-binding site is contributed by Arg-21. Residue 108-109 (GF) coordinates pyridoxal 5'-phosphate. His-133 is a substrate binding site. Residues Ser-179, His-207, and Thr-233 each contribute to the pyridoxal 5'-phosphate site. N6-(pyridoxal phosphate)lysine is present on Lys-236. Residue Thr-352 coordinates substrate.

This sequence belongs to the class-II pyridoxal-phosphate-dependent aminotransferase family. BioF subfamily. In terms of assembly, homodimer. The cofactor is pyridoxal 5'-phosphate.

The catalysed reaction is 6-carboxyhexanoyl-[ACP] + L-alanine + H(+) = (8S)-8-amino-7-oxononanoate + holo-[ACP] + CO2. The protein operates within cofactor biosynthesis; biotin biosynthesis. Catalyzes the decarboxylative condensation of pimeloyl-[acyl-carrier protein] and L-alanine to produce 8-amino-7-oxononanoate (AON), [acyl-carrier protein], and carbon dioxide. The sequence is that of 8-amino-7-oxononanoate synthase from Salmonella enteritidis PT4 (strain P125109).